The following is a 116-amino-acid chain: Large ribosomal subunit protein bL19 (116 aa).

It belongs to the bacterial ribosomal protein bL19 family.

In terms of biological role, this protein is located at the 30S-50S ribosomal subunit interface and may play a role in the structure and function of the aminoacyl-tRNA binding site. This Pseudomonas fluorescens (strain Pf0-1) protein is Large ribosomal subunit protein bL19.